Here is a 285-residue protein sequence, read N- to C-terminus: sn-2 palmitoyl-lipid 9-desaturase (285 aa).

Helical transmembrane passes span 20–40 (WINVVFFGVFHALALLSPWFF) and 44–64 (ALGLLVFLHWLFGSIGICLGY). The short motif at 65 to 70 (HRLLSH) is the Histidine box-1 element. The helical transmembrane segment at 81 to 101 (YAIALIGALALQGGPIFWVGG) threads the bilayer. The Histidine box-2 signature appears at 102–106 (HRQHH). A helical membrane pass occupies residues 169–189 (IPFALLLYVLGGWPFVFYGVF). The short motif at 239–243 (HHTYP) is the Histidine box-3 element.

Belongs to the fatty acid desaturase type 2 family. Fe(2+) serves as cofactor.

It is found in the membrane. It carries out the reaction a 1-acyl-2-hexadecanoyl-glycerolipid + 2 reduced [2Fe-2S]-[ferredoxin] + O2 + 2 H(+) = a 1-acyl-2-[(9Z)-hexadecenoyl]-glycerolipid + 2 oxidized [2Fe-2S]-[ferredoxin] + 2 H2O. Its pathway is lipid metabolism; fatty acid biosynthesis. Functionally, desaturase involved in fatty acid biosynthesis. Introduces a double bond at carbon 9 of palmitoyl groups (16:0) attached to the sn-2 position of the glycerol moiety of membrane glycerolipids. This chain is sn-2 palmitoyl-lipid 9-desaturase, found in Nostoc sp. (strain 36).